A 906-amino-acid chain; its full sequence is Patched domain-containing protein 3 (906 aa).

Residues Met1–Arg70 are disordered. Residues Asn148 and Asn235 are each glycosylated (N-linked (GlcNAc...) asparagine). 11 helical membrane-spanning segments follow: residues Thr338–Cys358, Val370–Leu390, Leu392–Val412, Val442–Thr462, Gly476–Leu496, Phe559–Val579, Val760–Cys780, Leu782–Trp802, Leu814–Ser834, Leu848–Val868, and Ile883–Leu903. In terms of domain architecture, SSD spans Val339 to Leu496.

The protein belongs to the patched family. In terms of tissue distribution, expressed in germ cells of the testis (at protein level).

The protein resides in the cell projection. It localises to the cilium. Its subcellular location is the flagellum membrane. The protein localises to the endoplasmic reticulum membrane. Its function is as follows. May play a role in sperm development or sperm function. However, does not appear to have an essential role in spermatogenesis or male fertility. This Mus musculus (Mouse) protein is Patched domain-containing protein 3 (Ptchd3).